Reading from the N-terminus, the 300-residue chain is Ornithine carbamoyltransferase (300 aa).

Carbamoyl phosphate contacts are provided by residues 51 to 54 (STRT), Q78, R102, and 129 to 132 (HPCQ). Residues N160, D217, and 221 to 222 (SM) each bind L-ornithine. Carbamoyl phosphate contacts are provided by residues 257–258 (CL) and R285.

This sequence belongs to the aspartate/ornithine carbamoyltransferase superfamily. OTCase family.

The protein localises to the cytoplasm. It catalyses the reaction carbamoyl phosphate + L-ornithine = L-citrulline + phosphate + H(+). The protein operates within amino-acid biosynthesis; L-arginine biosynthesis; L-arginine from L-ornithine and carbamoyl phosphate: step 1/3. Reversibly catalyzes the transfer of the carbamoyl group from carbamoyl phosphate (CP) to the N(epsilon) atom of ornithine (ORN) to produce L-citrulline. The protein is Ornithine carbamoyltransferase of Halorhodospira halophila (strain DSM 244 / SL1) (Ectothiorhodospira halophila (strain DSM 244 / SL1)).